The sequence spans 414 residues: Esterase FrsA (414 aa).

Belongs to the FrsA family.

The catalysed reaction is a carboxylic ester + H2O = an alcohol + a carboxylate + H(+). In terms of biological role, catalyzes the hydrolysis of esters. This is Esterase FrsA from Escherichia fergusonii (strain ATCC 35469 / DSM 13698 / CCUG 18766 / IAM 14443 / JCM 21226 / LMG 7866 / NBRC 102419 / NCTC 12128 / CDC 0568-73).